Here is a 463-residue protein sequence, read N- to C-terminus: Mitochondrial dynamics protein MID51 (463 aa).

Residues 1–23 (MAGAGERKGKKDDNGIGTAIDFV) are Mitochondrial intermembrane-facing. The helical transmembrane segment at 24–46 (LSNARLVLGVGGAAMLGIATLAV) threads the bilayer. The Cytoplasmic segment spans residues 47–463 (KRMYDRAISA…LSEPEVLLQT (417 aa)). Residues 49-195 (MYDRAISAPT…LSGSLYDDLQ (147 aa)) form a dimerization region. Phosphoserine occurs at positions 55, 59, 79, and 94. A disordered region spans residues 57-79 (PTSPTRLSHSGKRSWEEPNWMGS). The disordered stretch occupies residues 104–123 (AFDTDTFCPPRPKPVARKGQ). Residues 160–169 (AAVDICAELR) are important for interaction with DNM1L. ADP is bound by residues Ser-187, Ser-189, and His-201. Positions 234 to 243 (RRENPEYFPR) are important for interaction with DNM1L. ADP is bound by residues Ser-340, Arg-342, and Lys-368.

It belongs to the MID49/MID51 family. As to quaternary structure, homodimer. Interacts with DNM1L.

The protein resides in the mitochondrion outer membrane. Its function is as follows. Mitochondrial outer membrane protein which regulates mitochondrial fission/fusion dynamics. Promotes the recruitment and association of the fission mediator dynamin-related protein 1 (DNM1L) to the mitochondrial surface independently of the mitochondrial fission FIS1 and MFF proteins. Regulates DNM1L GTPase activity and DNM1L oligomerization. Binds ADP and can also bind GDP, although with lower affinity. Does not bind CDP, UDP, ATP, AMP or GTP. Inhibits DNM1L GTPase activity in the absence of bound ADP. Requires ADP to stimulate DNM1L GTPase activity and the assembly of DNM1L into long, oligomeric tubules with a spiral pattern, as opposed to the ring-like DNM1L oligomers observed in the absence of bound ADP. Does not require ADP for its function in recruiting DNM1L. In Pongo abelii (Sumatran orangutan), this protein is Mitochondrial dynamics protein MID51 (MIEF1).